The chain runs to 661 residues: UvrABC system protein B (661 aa).

In terms of domain architecture, Helicase ATP-binding spans 28–414; the sequence is DGVNERKRHQ…HTDEMVEQII (387 aa). 41–48 serves as a coordination point for ATP; that stretch reads GATGTGKT. The Beta-hairpin signature appears at 94 to 117; that stretch reads YYDYYQPEAYVPSTDTFIEKDASI. A Helicase C-terminal domain is found at 432-598; that stretch reads QIDDLLSEIQ…TINKKIHDVI (167 aa). The interval 603-624 is disordered; that stretch reads ESDETNQQQQTELPKKMTKKER. One can recognise a UVR domain in the interval 625–660; that stretch reads QKTIENIEKEMKKAAKDLDFEKATELRDMLFELKAE.

It belongs to the UvrB family. As to quaternary structure, forms a heterotetramer with UvrA during the search for lesions. Interacts with UvrC in an incision complex.

The protein localises to the cytoplasm. In terms of biological role, the UvrABC repair system catalyzes the recognition and processing of DNA lesions. A damage recognition complex composed of 2 UvrA and 2 UvrB subunits scans DNA for abnormalities. Upon binding of the UvrA(2)B(2) complex to a putative damaged site, the DNA wraps around one UvrB monomer. DNA wrap is dependent on ATP binding by UvrB and probably causes local melting of the DNA helix, facilitating insertion of UvrB beta-hairpin between the DNA strands. Then UvrB probes one DNA strand for the presence of a lesion. If a lesion is found the UvrA subunits dissociate and the UvrB-DNA preincision complex is formed. This complex is subsequently bound by UvrC and the second UvrB is released. If no lesion is found, the DNA wraps around the other UvrB subunit that will check the other stand for damage. This chain is UvrABC system protein B, found in Staphylococcus epidermidis (strain ATCC 12228 / FDA PCI 1200).